The sequence spans 736 residues: Zinc finger CCCH domain-containing protein 14 (736 aa).

An N-acetylmethionine modification is found at methionine 1. Polar residues-rich tracts occupy residues 77-103 (TTEP…SNFS) and 131-145 (VSTS…NVRQ). The disordered stretch occupies residues 77–145 (TTEPSSLKSS…QESKTTNVRQ (69 aa)). Serine 85 carries the phosphoserine modification. Residues lysine 99, lysine 139, lysine 175, and lysine 198 each participate in a glycyl lysine isopeptide (Lys-Gly) (interchain with G-Cter in SUMO2) cross-link. Serine 240 carries the phosphoserine modification. Residue lysine 245 forms a Glycyl lysine isopeptide (Lys-Gly) (interchain with G-Cter in SUMO2) linkage. Serine 281 is modified (phosphoserine). Residues lysine 283 and lysine 295 each participate in a glycyl lysine isopeptide (Lys-Gly) (interchain with G-Cter in SUMO2) cross-link. The disordered stretch occupies residues 310-350 (HDGEEEEEDDDYGSRTGSISSSVSVPAKPERRPSLPPSKQA). Phosphoserine is present on residues serine 327 and serine 343. Lysine 357 carries the post-translational modification N6-acetyllysine; alternate. A Glycyl lysine isopeptide (Lys-Gly) (interchain with G-Cter in SUMO2); alternate cross-link involves residue lysine 357. Residue lysine 378 forms a Glycyl lysine isopeptide (Lys-Gly) (interchain with G-Cter in SUMO2) linkage. Phosphoserine is present on residues serine 390 and serine 409. Residues 398 to 430 (VVQGQSRTPRISPPIKEEETKGDSVEKNQGTQQ) are disordered. Over residues 412–423 (IKEEETKGDSVE) the composition is skewed to basic and acidic residues. A Glycyl lysine isopeptide (Lys-Gly) (interchain with G-Cter in SUMO2) cross-link involves residue lysine 413. Serine 421 is subject to Phosphoserine. A Glycyl lysine isopeptide (Lys-Gly) (interchain with G-Cter in SUMO2) cross-link involves residue lysine 489. Serine 498, serine 515, serine 527, and serine 620 each carry phosphoserine. 5 C3H1-type zinc fingers span residues 595 to 620 (EKLL…HPIS), 621 to 640 (PCKA…VHPN), 641 to 656 (CKYD…PFTH), 682 to 699 (CRYF…YHPK), and 701 to 719 (CRFN…HPTI).

It belongs to the ZC3H14 family. In terms of assembly, homodimer; facilitating circular RNAs (circRNAs) formation. Associates with the spliceosome. Interacts with HOOK2. Interacts with ZFC3H1 in a RNase-sensitive manner. In terms of tissue distribution, expressed in fetal and adult brain. Expressed in fetal and adult temporal lobe.

The protein resides in the nucleus speckle. It localises to the cytoplasm. Functionally, RNA-binding protein involved in the biogenesis of circular RNAs (circRNAs), which are produced by back-splicing circularization of pre-mRNAs. Acts by binding to both exon-intron boundary and 3'-UTR of pre-mRNAs to promote circRNA biogenesis through dimerization and the association with the spliceosome. Required for spermatogenesis via involvement in circRNA biogenesis. Regulates the pre-mRNA processing of ATP5MC1; preventing its degradation. Also binds the poly(A) tail of mRNAs; controlling poly(A) length in neuronal cells. This chain is Zinc finger CCCH domain-containing protein 14, found in Homo sapiens (Human).